The chain runs to 466 residues: Fumarate hydratase class II (466 aa).

Residues 99–101, 129–132, 139–141, and threonine 187 contribute to the substrate site; these read SGT, HPND, and SSN. Histidine 188 functions as the Proton donor/acceptor in the catalytic mechanism. Serine 318 is an active-site residue. Residues serine 319 and 324–326 each bind substrate; that span reads KVN.

The protein belongs to the class-II fumarase/aspartase family. Fumarase subfamily. As to quaternary structure, homotetramer.

The protein resides in the cytoplasm. It catalyses the reaction (S)-malate = fumarate + H2O. It functions in the pathway carbohydrate metabolism; tricarboxylic acid cycle; (S)-malate from fumarate: step 1/1. Its function is as follows. Involved in the TCA cycle. Catalyzes the stereospecific interconversion of fumarate to L-malate. This chain is Fumarate hydratase class II, found in Thermus thermophilus (strain ATCC BAA-163 / DSM 7039 / HB27).